The following is a 332-amino-acid chain: 2,3-diketo-L-gulonate reductase (332 aa).

The active-site Proton donor is His44. Residues 168–174 (ITMVDMS), 224–225 (WK), and 304–306 (GHE) contribute to the NAD(+) site.

This sequence belongs to the LDH2/MDH2 oxidoreductase family. DlgD subfamily. In terms of assembly, homodimer.

The protein localises to the cytoplasm. It carries out the reaction 3-dehydro-L-gulonate + NAD(+) = 2,3-dioxo-L-gulonate + NADH + H(+). The catalysed reaction is 3-dehydro-L-gulonate + NADP(+) = 2,3-dioxo-L-gulonate + NADPH + H(+). Catalyzes the reduction of 2,3-diketo-L-gulonate in the presence of NADH, to form 3-keto-L-gulonate. This is 2,3-diketo-L-gulonate reductase from Salmonella typhimurium (strain LT2 / SGSC1412 / ATCC 700720).